The sequence spans 229 residues: 3-isopropylmalate dehydratase small subunit (229 aa).

Residues Lys-208–Ile-229 form a disordered region.

This sequence belongs to the LeuD family. LeuD type 1 subfamily. Heterodimer of LeuC and LeuD.

It catalyses the reaction (2R,3S)-3-isopropylmalate = (2S)-2-isopropylmalate. It participates in amino-acid biosynthesis; L-leucine biosynthesis; L-leucine from 3-methyl-2-oxobutanoate: step 2/4. Its function is as follows. Catalyzes the isomerization between 2-isopropylmalate and 3-isopropylmalate, via the formation of 2-isopropylmaleate. The chain is 3-isopropylmalate dehydratase small subunit from Bifidobacterium longum subsp. infantis (strain ATCC 15697 / DSM 20088 / JCM 1222 / NCTC 11817 / S12).